A 344-amino-acid polypeptide reads, in one-letter code: Methionine import ATP-binding protein MetN 1 (344 aa).

One can recognise an ABC transporter domain in the interval I2–I241. G38 to S45 provides a ligand contact to ATP.

This sequence belongs to the ABC transporter superfamily. Methionine importer (TC 3.A.1.24) family. The complex is composed of two ATP-binding proteins (MetN), two transmembrane proteins (MetI) and a solute-binding protein (MetQ).

It localises to the cell inner membrane. The catalysed reaction is L-methionine(out) + ATP + H2O = L-methionine(in) + ADP + phosphate + H(+). It carries out the reaction D-methionine(out) + ATP + H2O = D-methionine(in) + ADP + phosphate + H(+). Part of the ABC transporter complex MetNIQ involved in methionine import. Responsible for energy coupling to the transport system. This chain is Methionine import ATP-binding protein MetN 1, found in Burkholderia lata (strain ATCC 17760 / DSM 23089 / LMG 22485 / NCIMB 9086 / R18194 / 383).